The chain runs to 160 residues: Transcription elongation factor GreA (160 aa).

Positions 1 to 72 (MAEKTYPMTQ…QIQILETKIR (72 aa)) form a coiled coil.

The protein belongs to the GreA/GreB family.

Functionally, necessary for efficient RNA polymerase transcription elongation past template-encoded arresting sites. The arresting sites in DNA have the property of trapping a certain fraction of elongating RNA polymerases that pass through, resulting in locked ternary complexes. Cleavage of the nascent transcript by cleavage factors such as GreA or GreB allows the resumption of elongation from the new 3'terminus. GreA releases sequences of 2 to 3 nucleotides. This is Transcription elongation factor GreA from Streptococcus agalactiae serotype Ia (strain ATCC 27591 / A909 / CDC SS700).